Consider the following 157-residue polypeptide: Protein MGF 110-13L (157 aa).

Transmembrane regions (helical) follow at residues 14 to 34 and 39 to 59; these read QYCLYFIIGIAYTDCFICALC and LSTTMKLFVLLSILVWLAQPV.

This sequence belongs to the asfivirus MGF 110 family.

The protein resides in the host membrane. In terms of biological role, plays a role in virus cell tropism, and may be required for efficient virus replication in macrophages. This African swine fever virus (isolate Tick/Malawi/Lil 20-1/1983) (ASFV) protein is Protein MGF 110-13L.